The primary structure comprises 123 residues: MARVKRSVNAKKKRREVLDQASGYRGQRSRLYRKAKEQTLHSATYSFRDRRAKKGDFRSLWIQRINAASRAQGMTYNRFINGLKNAGVEVDRKMLAELAVSDINAFNSLVEVAKANQPQNAAA.

Positions 1-15 (MARVKRSVNAKKKRR) are enriched in basic residues. The segment at 1 to 23 (MARVKRSVNAKKKRREVLDQASG) is disordered.

It belongs to the bacterial ribosomal protein bL20 family.

In terms of biological role, binds directly to 23S ribosomal RNA and is necessary for the in vitro assembly process of the 50S ribosomal subunit. It is not involved in the protein synthesizing functions of that subunit. This is Large ribosomal subunit protein bL20 from Cutibacterium acnes (strain DSM 16379 / KPA171202) (Propionibacterium acnes).